Here is a 435-residue protein sequence, read N- to C-terminus: Pregnancy-specific beta-1-glycoprotein 6 (435 aa).

The signal sequence occupies residues 1–34 (MGPLSAPPCTQHITWKGLLLTASLLNFWNLPTTA). The Ig-like V-type domain maps to 35-143 (QVIIEAKPPK…TGYFTVTLYS (109 aa)). 3 N-linked (GlcNAc...) asparagine glycosylation sites follow: asparagine 61, asparagine 103, and asparagine 110. The Cell attachment site signature appears at 126–128 (RGD). 3 consecutive Ig-like C2-type domains span residues 148 to 233 (PSIS…VTLN), 241 to 326 (PYIT…VTLN), and 334 to 405 (PRIY…KEIS). Intrachain disulfides connect cysteine 168-cysteine 216, cysteine 261-cysteine 309, and cysteine 353-cysteine 393. Residues asparagine 198, asparagine 267, asparagine 302, and asparagine 386 are each glycosylated (N-linked (GlcNAc...) asparagine).

It belongs to the immunoglobulin superfamily. CEA family.

The protein localises to the secreted. This is Pregnancy-specific beta-1-glycoprotein 6 (PSG6) from Homo sapiens (Human).